Consider the following 158-residue polypeptide: 2-C-methyl-D-erythritol 2,4-cyclodiphosphate synthase (158 aa).

Residues D9 and H11 each contribute to the a divalent metal cation site. Residues 9–11 and 35–36 each bind 4-CDP-2-C-methyl-D-erythritol 2-phosphate; these read DVH and HS. H43 contributes to the a divalent metal cation binding site. Residues 57–59, 62–66, 101–107, 133–136, F140, and R143 contribute to the 4-CDP-2-C-methyl-D-erythritol 2-phosphate site; these read DIG, FPDTD, AQKPKMA, and TTTE.

It belongs to the IspF family. As to quaternary structure, homotrimer. It depends on a divalent metal cation as a cofactor.

It carries out the reaction 4-CDP-2-C-methyl-D-erythritol 2-phosphate = 2-C-methyl-D-erythritol 2,4-cyclic diphosphate + CMP. It participates in isoprenoid biosynthesis; isopentenyl diphosphate biosynthesis via DXP pathway; isopentenyl diphosphate from 1-deoxy-D-xylulose 5-phosphate: step 4/6. Functionally, involved in the biosynthesis of isopentenyl diphosphate (IPP) and dimethylallyl diphosphate (DMAPP), two major building blocks of isoprenoid compounds. Catalyzes the conversion of 4-diphosphocytidyl-2-C-methyl-D-erythritol 2-phosphate (CDP-ME2P) to 2-C-methyl-D-erythritol 2,4-cyclodiphosphate (ME-CPP) with a corresponding release of cytidine 5-monophosphate (CMP). This chain is 2-C-methyl-D-erythritol 2,4-cyclodiphosphate synthase, found in Bacillus thuringiensis subsp. konkukian (strain 97-27).